The following is a 466-amino-acid chain: Ras GTPase-activating protein-binding protein 1 (466 aa).

One can recognise an NTF2 domain in the interval 11-133 (VGREFVRQYY…FYVHNDIFRY (123 aa)). Residues K36, K50, K59, K64, K76, and K123 each participate in a glycyl lysine isopeptide (Lys-Gly) (interchain with G-Cter in ubiquitin) cross-link. Residues 142-225 (VTEPQEESEE…EPVLEETAPE (84 aa)) form an acidic disordered region region. T143 carries the post-translational modification Phosphothreonine. Disordered stretches follow at residues 144–172 (EPQE…DSGT) and 184–243 (EEHL…QTVQ). 2 stretches are compositionally biased toward acidic residues: residues 145–157 (PQEE…EEPE) and 185–206 (EHLE…EQEP). At S149 the chain carries Phosphoserine. Phosphoserine occurs at positions 231, 232, 250, and 253. Residues 255–329 (TSKNLPPSGA…REAGEQGDIE (75 aa)) are disordered. Composition is skewed to basic and acidic residues over residues 297-307 (PQRDQRVREQR) and 318-329 (PIREAGEQGDIE). One can recognise an RRM domain in the interval 340–415 (HQLFIGNLPH…VRLNVEEKKT (76 aa)). Residues K353 and K357 each participate in a glycyl lysine isopeptide (Lys-Gly) (interchain with G-Cter in ubiquitin) cross-link. Residue S373 is modified to Phosphoserine. A Glycyl lysine isopeptide (Lys-Gly) (interchain with G-Cter in ubiquitin) cross-link involves residue K376. The residue at position 376 (K376) is an N6-acetyllysine; alternate. K376 is covalently cross-linked (Glycyl lysine isopeptide (Lys-Gly) (interchain with G-Cter in SUMO2); alternate). Residue K393 forms a Glycyl lysine isopeptide (Lys-Gly) (interchain with G-Cter in ubiquitin); alternate linkage. Residues 410–466 (VEEKKTRAAREGDRRDNRLRGPGGPRGGLGGGMRGPPRGGMVQKPGFGVGRGLAPRQ) form an RG-rich region region. Residues 413–428 (KKTRAAREGDRRDNRL) are compositionally biased toward basic and acidic residues. The tract at residues 413–466 (KKTRAAREGDRRDNRLRGPGGPRGGLGGGMRGPPRGGMVQKPGFGVGRGLAPRQ) is disordered. R429 is subject to Asymmetric dimethylarginine. The span at 430–447 (GPGGPRGGLGGGMRGPPR) shows a compositional bias: gly residues. Position 435 is an asymmetric dimethylarginine; alternate (R435). R435 is modified (dimethylated arginine; alternate). Position 435 is an omega-N-methylarginine; alternate (R435). An Omega-N-methylarginine modification is found at R447. A Dimethylated arginine; alternate modification is found at R460. R460 is modified (omega-N-methylarginine; alternate). At R465 the chain carries Omega-N-methylarginine.

In terms of assembly, homodimer and oligomer. Component of a TAU mRNP complex, at least composed of IGF2BP1, ELAVL4 and G3BP1. Binds to the SH3 domain of Ras GTPase-activating protein (RASA1) in proliferating cells. No interaction in quiescent cells. Interacts (via NTF2 domain) with USP10; inhibiting stress granule formation by lowering G3BP1 valence. Interacts (via NTF2 domain) with CAPRIN1; promoting stress granule formation by lowering the saturation-concentration of G3BP1. Interacts (via NTF2 domain) with UBAP2L; promoting stress granule formation. Associates (via RG-rich region) with 40S ribosome subunits. Interacts with RPTOR and SPAG5; this complex is increased by oxidative stress. Interacts with ATXN2L. Interacts with STYXL1. Interacts with CGAS (via N-terminus); this interaction promotes the DNA-binding and activation of CGAS. Interacts (via C-terminus) with RIGI. Interacts with PABPC1. Interacts with QKI (isoforms QKI6 and QKI7); directing N(7)-methylguanine-containing mRNAs to stress granules. As to quaternary structure, (Microbial infection) Interacts with Semliki forest virus non-structural protein 3 (via C-terminus); this interaction inhibits the formation of stress granules on viral mRNAs and the nsp3-G3BP1 complexes bind viral RNAs and probably orchestrate the assembly of viral replication complexes. (Microbial infection) Interacts with Chikungunya virus non-structural protein 3 (via C-terminus); this interaction inhibits the formation of stress granules on viral mRNAs and the nsp3-G3BP1 complexes bind viral RNAs and probably orchestrate the assembly of viral replication complexes. In terms of assembly, (Microbial infection) Interacts with Sindbis virus non-structural protein 3 (via C-terminus); this interaction inhibits the formation of stress granules on viral mRNAs and the nsp3-G3BP1 complexes bind viral RNAs and probably orchestrate the assembly of viral replication complexes. As to quaternary structure, (Microbial infection) Interacts with Zika virus capsid protein C; this interaction is probably linked to the inhibition of stress granules formation by the virus. (Microbial infection) Interacts with reovirus type 2 protein sigma-NS; this interaction induces the relocalization of G3BP1 to the outer periphery of sigma-NS/mu-Ns viral factories and is probably involved in the suppression of the integrated stress response by the virus. In terms of assembly, (Microbial infection) Interacts with SARS-CoV-2 N protein; the interaction is enhanced by host HDAC6 which deacetylates the viral N protein and promotes N protein association with G3BP1, disrupting stress granule formation and facilitating viral replication. Interacts with HDAC6; the interaction increases during SARS-CoV-2 infection. Mg(2+) serves as cofactor. Phosphorylation of the acidic disordered region regulates stress granule assembly. RASA1-dependent phosphorylation of Ser-149 induces a conformational change that prevents self-association. Dephosphorylation after HRAS activation is required for stress granule assembly. Ser-149 phosphorylation induces partial nuclear localization. Post-translationally, ubiquitinated by TRIM21 via 'Lys-63'-linked polyubiquitination in the NTF2 domain in response to heat shock, leading to stress granule disassembly: ubiquitination promotes interaction with the FAF2 adapter, followed by interaction with VCP, which extracts G3BP1 from stress granules, leading to stress granule disassembly. In case of prolonged stress, ubiquitination by TRIM21 leads to autophagy-dependent degradation of G3BP1 via recruitment of ubiquitinated G3BP1 by SQSTM1 and/or CALCOCO2 to autophagosomes. In terms of processing, (Microbial infection) Cleaved by human enterovirus 71; this cleavage induces the disassembly of cytoplasmic stress granules. Cleaved by Foot-and-mouth disease virus; this cleavage suppresses the formation of cytoplasmic stress granules. Arg-435 is dimethylated, probably to asymmetric dimethylarginine. Post-translationally, (Microbial infection) Cleaved by Encephalomyocarditis virus protease 3C; this cleavage suppresses the formation of cytoplasmic stress granules. In terms of tissue distribution, ubiquitous.

The protein resides in the cytoplasm. Its subcellular location is the cytosol. It is found in the perikaryon. The protein localises to the stress granule. It localises to the nucleus. The enzyme catalyses ATP + H2O = ADP + phosphate + H(+). With respect to regulation, under physiological conditions, G3BP1 adopts a compact state that is stabilized by intramolecular interactions between the RG-rich and the acidic regions that inhibit phase separation. Upon stress, polysomes disassemble and mRNAs are released in an unfolded protein-free state. Binding of unfolded mRNA to G3BP1 outcompetes the intramolecular interactions and RNA-bound G3BP1 adopts an expanded conformation in which the RG-rich region becomes exposed to engage in protein-protein and protein-RNA interactions, allowing physical cross-linking of RNA molecules to form protein-RNA condensates, leading to liquid-liquid phase separation (LLPS). Functionally, protein involved in various processes, such as stress granule formation and innate immunity. Plays an essential role in stress granule formation. Stress granules are membraneless compartments that store mRNAs and proteins, such as stalled translation pre-initiation complexes, in response to stress. Promotes formation of stress granules phase-separated membraneless compartment by undergoing liquid-liquid phase separation (LLPS) upon unfolded RNA-binding: functions as a molecular switch that triggers RNA-dependent LLPS in response to a rise in intracellular free RNA concentrations. Also acts as an ATP- and magnesium-dependent helicase: unwinds DNA/DNA, RNA/DNA, and RNA/RNA substrates with comparable efficiency. Acts unidirectionally by moving in the 5' to 3' direction along the bound single-stranded DNA. Unwinds preferentially partial DNA and RNA duplexes having a 17 bp annealed portion and either a hanging 3' tail or hanging tails at both 5'- and 3'-ends. Plays an essential role in innate immunity by promoting CGAS and RIGI activity. Participates in the DNA-triggered cGAS/STING pathway by promoting the DNA binding and activation of CGAS. Triggers the condensation of cGAS, a process probably linked to the formation of membrane-less organelles. Also enhances RIGI-induced type I interferon production probably by helping RIGI at sensing pathogenic RNA. May also act as a phosphorylation-dependent sequence-specific endoribonuclease in vitro: Cleaves exclusively between cytosine and adenine and cleaves MYC mRNA preferentially at the 3'-UTR. This is Ras GTPase-activating protein-binding protein 1 from Homo sapiens (Human).